Reading from the N-terminus, the 120-residue chain is Ribosome-binding factor A (120 aa).

It belongs to the RbfA family. Monomer. Binds 30S ribosomal subunits, but not 50S ribosomal subunits or 70S ribosomes.

It localises to the cytoplasm. In terms of biological role, one of several proteins that assist in the late maturation steps of the functional core of the 30S ribosomal subunit. Associates with free 30S ribosomal subunits (but not with 30S subunits that are part of 70S ribosomes or polysomes). Required for efficient processing of 16S rRNA. May interact with the 5'-terminal helix region of 16S rRNA. This Clostridium botulinum (strain ATCC 19397 / Type A) protein is Ribosome-binding factor A.